A 397-amino-acid polypeptide reads, in one-letter code: Formate-dependent phosphoribosylglycinamide formyltransferase (397 aa).

N(1)-(5-phospho-beta-D-ribosyl)glycinamide-binding positions include 21 to 22 (EL) and glutamate 81. ATP is bound by residues arginine 113, lysine 154, 194 to 197 (EEYV), and glutamate 202. The region spanning 118 to 313 (KLAAEKVKVP…EFQIHVRSAL (196 aa)) is the ATP-grasp domain. Positions 272 and 284 each coordinate Mg(2+). N(1)-(5-phospho-beta-D-ribosyl)glycinamide-binding positions include aspartate 291, lysine 361, and 368–369 (RR).

It belongs to the PurK/PurT family. In terms of assembly, homodimer.

The enzyme catalyses N(1)-(5-phospho-beta-D-ribosyl)glycinamide + formate + ATP = N(2)-formyl-N(1)-(5-phospho-beta-D-ribosyl)glycinamide + ADP + phosphate + H(+). It participates in purine metabolism; IMP biosynthesis via de novo pathway; N(2)-formyl-N(1)-(5-phospho-D-ribosyl)glycinamide from N(1)-(5-phospho-D-ribosyl)glycinamide (formate route): step 1/1. Its function is as follows. Involved in the de novo purine biosynthesis. Catalyzes the transfer of formate to 5-phospho-ribosyl-glycinamide (GAR), producing 5-phospho-ribosyl-N-formylglycinamide (FGAR). Formate is provided by PurU via hydrolysis of 10-formyl-tetrahydrofolate. This is Formate-dependent phosphoribosylglycinamide formyltransferase from Sulfurisphaera tokodaii (strain DSM 16993 / JCM 10545 / NBRC 100140 / 7) (Sulfolobus tokodaii).